Consider the following 492-residue polypeptide: Citrate synthase, peroxisomal (492 aa).

Active-site residues include histidine 307, histidine 346, and aspartate 402. A disordered region spans residues proline 469–histidine 492. Residues glutamine 475–lysine 484 show a composition bias toward polar residues.

This sequence belongs to the citrate synthase family.

Its subcellular location is the peroxisome. The enzyme catalyses oxaloacetate + acetyl-CoA + H2O = citrate + CoA + H(+). It functions in the pathway carbohydrate metabolism; tricarboxylic acid cycle; isocitrate from oxaloacetate: step 1/2. Peroxisomal protein involved in the cellular biosynthesis of citrate, and required primarily for cell growth and modulation of multicellular development. The polypeptide is Citrate synthase, peroxisomal (cshA) (Dictyostelium discoideum (Social amoeba)).